The following is a 136-amino-acid chain: Holo-[acyl-carrier-protein] synthase (136 aa).

Residues D8 and E57 each coordinate Mg(2+).

This sequence belongs to the P-Pant transferase superfamily. AcpS family. It depends on Mg(2+) as a cofactor.

It is found in the cytoplasm. The enzyme catalyses apo-[ACP] + CoA = holo-[ACP] + adenosine 3',5'-bisphosphate + H(+). Its function is as follows. Transfers the 4'-phosphopantetheine moiety from coenzyme A to a Ser of acyl-carrier-protein. The protein is Holo-[acyl-carrier-protein] synthase of Methylobacterium radiotolerans (strain ATCC 27329 / DSM 1819 / JCM 2831 / NBRC 15690 / NCIMB 10815 / 0-1).